Consider the following 206-residue polypeptide: MPSRRRTLLKVIILGDSGVGKTSLMNQYVNKKFSNQYKATIGADFLTKEVQFEDRLFTLQIWDTAGQERFQSLGVAFYRGADCCVLVYDVNSMKSFENLNNWREEFLIQASPSDPENFPFVLIGNKVDVDDGNSRVVSEKKAKAWCASKGNIPYFETSAKVGTNVEEAFQCIAKDALKSGEEEELYLPDTIDVGTSNQQRSTGCEC.

GTP is bound at residue Gly-15–Ser-23. An Effector region motif is present at residues Tyr-37–Phe-45. GTP is bound by residues Asp-63 to Gln-67, Asn-125 to Asp-128, and Ser-158 to Ala-159. 2 S-geranylgeranyl cysteine lipidation sites follow: Cys-204 and Cys-206. Cys-206 bears the Cysteine methyl ester mark.

It belongs to the small GTPase superfamily. Rab family. In terms of assembly, interacts with VPS35A.

It localises to the endosome membrane. The protein localises to the vacuole membrane. The protein resides in the prevacuolar compartment membrane. With respect to regulation, regulated by guanine nucleotide exchange factors (GEFs) which promote the exchange of bound GDP for free GTP. Regulated by the MON1-CCZ1 complex which serves as a link between Rab5 and Rab7 protein families in PVCs and mediates PVC maturation. Functionally, essential for trafficking from prevacuolar compartments to vacuoles. Involved in the trafficking of newly synthesized protein to vacuoles. Essential for plant growth. Participates in the recruitment of the core retromer components to the endosomal membrane by interacting with VPS35A. The polypeptide is Ras-related protein RABG3f (RABG3F) (Arabidopsis thaliana (Mouse-ear cress)).